The sequence spans 278 residues: Tyrosine-protein phosphatase pmp1 (278 aa).

The Tyrosine-protein phosphatase domain maps to 60-214; the sequence is GPVCIYPPNI…LSEYQQIIRK (155 aa). The active-site Phosphocysteine intermediate is the C158. The interval 217 to 278 is disordered; that stretch reads SQGPYQSSSL…SSGSISNDAS (62 aa). Residues 252–278 are compositionally biased toward polar residues; it reads SPSTSESSMFTNLRRTRSSGSISNDAS.

It belongs to the protein-tyrosine phosphatase family. Non-receptor class dual specificity subfamily.

It carries out the reaction O-phospho-L-tyrosyl-[protein] + H2O = L-tyrosyl-[protein] + phosphate. Functionally, dual specificity phosphatase that dephosphorylates MAP kinase pmk1 on a Tyr. Has a role in chloride ion homeostasis by inactivating this pmk1 MAP kinase pathway. The polypeptide is Tyrosine-protein phosphatase pmp1 (pmp1) (Schizosaccharomyces pombe (strain 972 / ATCC 24843) (Fission yeast)).